The sequence spans 331 residues: Glyceraldehyde-3-phosphate dehydrogenase (331 aa).

Residues 12–13 (RI), Asp34, Arg78, and Thr120 each bind NAD(+). D-glyceraldehyde 3-phosphate-binding positions include 149–151 (SCT), Thr180, 209–210 (TG), and Arg232. Cys150 serves as the catalytic Nucleophile. NAD(+) is bound at residue Asn314.

This sequence belongs to the glyceraldehyde-3-phosphate dehydrogenase family. In terms of assembly, homotetramer.

It localises to the cytoplasm. It carries out the reaction D-glyceraldehyde 3-phosphate + phosphate + NAD(+) = (2R)-3-phospho-glyceroyl phosphate + NADH + H(+). Its pathway is carbohydrate degradation; glycolysis; pyruvate from D-glyceraldehyde 3-phosphate: step 1/5. Its function is as follows. Catalyzes the oxidative phosphorylation of glyceraldehyde 3-phosphate (G3P) to 1,3-bisphosphoglycerate (BPG) using the cofactor NAD. The first reaction step involves the formation of a hemiacetal intermediate between G3P and a cysteine residue, and this hemiacetal intermediate is then oxidized to a thioester, with concomitant reduction of NAD to NADH. The reduced NADH is then exchanged with the second NAD, and the thioester is attacked by a nucleophilic inorganic phosphate to produce BPG. This chain is Glyceraldehyde-3-phosphate dehydrogenase (gapA), found in Escherichia fergusonii (strain ATCC 35469 / DSM 13698 / CCUG 18766 / IAM 14443 / JCM 21226 / LMG 7866 / NBRC 102419 / NCTC 12128 / CDC 0568-73).